A 332-amino-acid polypeptide reads, in one-letter code: L-lactate dehydrogenase C chain (332 aa).

Residue Ser-2 is modified to Blocked amino end (Ser). NAD(+) is bound by residues 29 to 57 and Arg-99; that span reads GNVG…DENK. Substrate-binding residues include Arg-106, Asn-138, and Arg-169. Asn-138 provides a ligand contact to NAD(+). The active-site Proton acceptor is the His-193. A substrate-binding site is contributed by Thr-248.

This sequence belongs to the LDH/MDH superfamily. LDH family. As to quaternary structure, homotetramer. Interacts with RABL2/RABL2A; binds preferentially to GTP-bound RABL2.

It localises to the cytoplasm. The enzyme catalyses (S)-lactate + NAD(+) = pyruvate + NADH + H(+). It participates in fermentation; pyruvate fermentation to lactate; (S)-lactate from pyruvate: step 1/1. Possible role in sperm motility. This chain is L-lactate dehydrogenase C chain (Ldhc), found in Rattus norvegicus (Rat).